We begin with the raw amino-acid sequence, 305 residues long: Ribonuclease Z (305 aa).

Zn(2+) contacts are provided by H61, H63, D65, H66, H138, D208, and H266. D65 serves as the catalytic Proton acceptor.

This sequence belongs to the RNase Z family. Homodimer. Requires Zn(2+) as cofactor.

It carries out the reaction Endonucleolytic cleavage of RNA, removing extra 3' nucleotides from tRNA precursor, generating 3' termini of tRNAs. A 3'-hydroxy group is left at the tRNA terminus and a 5'-phosphoryl group is left at the trailer molecule.. In terms of biological role, zinc phosphodiesterase, which displays some tRNA 3'-processing endonuclease activity. Probably involved in tRNA maturation, by removing a 3'-trailer from precursor tRNA. In Methanosarcina mazei (strain ATCC BAA-159 / DSM 3647 / Goe1 / Go1 / JCM 11833 / OCM 88) (Methanosarcina frisia), this protein is Ribonuclease Z.